Here is a 388-residue protein sequence, read N- to C-terminus: Biotin synthase (388 aa).

The region spanning 47–277 is the Radical SAM core domain; sequence WFGRRVKLNY…DVEVRIAGGR (231 aa). 3 residues coordinate [4Fe-4S] cluster: Cys-65, Cys-69, and Cys-72. Residues Cys-109, Cys-142, Cys-202, and Arg-272 each coordinate [2Fe-2S] cluster. The interval 335–371 is disordered; it reads APAGGCGSEQSAGCGSHEGGGACGSAPAPRTDEARTD.

It belongs to the radical SAM superfamily. Biotin synthase family. Homodimer. Requires [4Fe-4S] cluster as cofactor. [2Fe-2S] cluster serves as cofactor.

It carries out the reaction (4R,5S)-dethiobiotin + (sulfur carrier)-SH + 2 reduced [2Fe-2S]-[ferredoxin] + 2 S-adenosyl-L-methionine = (sulfur carrier)-H + biotin + 2 5'-deoxyadenosine + 2 L-methionine + 2 oxidized [2Fe-2S]-[ferredoxin]. It functions in the pathway cofactor biosynthesis; biotin biosynthesis; biotin from 7,8-diaminononanoate: step 2/2. Its function is as follows. Catalyzes the conversion of dethiobiotin (DTB) to biotin by the insertion of a sulfur atom into dethiobiotin via a radical-based mechanism. The polypeptide is Biotin synthase (Streptomyces avermitilis (strain ATCC 31267 / DSM 46492 / JCM 5070 / NBRC 14893 / NCIMB 12804 / NRRL 8165 / MA-4680)).